A 478-amino-acid chain; its full sequence is Argininosuccinate lyase (478 aa).

The protein belongs to the lyase 1 family. Argininosuccinate lyase subfamily.

The protein resides in the cytoplasm. It catalyses the reaction 2-(N(omega)-L-arginino)succinate = fumarate + L-arginine. It participates in amino-acid biosynthesis; L-arginine biosynthesis; L-arginine from L-ornithine and carbamoyl phosphate: step 3/3. The sequence is that of Argininosuccinate lyase from Rhodospirillum rubrum (strain ATCC 11170 / ATH 1.1.1 / DSM 467 / LMG 4362 / NCIMB 8255 / S1).